The primary structure comprises 156 residues: MKLTLYAVGSKMPAWVSQGFAEYSRRFPRDLSFNLVEIPAGKRGKNADISRILAKEGELLLAAIPKGNRIVTLEVEGQSWTTPKLAKQLEQWQLDGRDVALLVGGPEGLAPACIKASEQKWSLSALTLPHPMVRILIAESLYRAWSVNTNHPYHRE.

S-adenosyl-L-methionine-binding positions include leucine 73, glycine 104, and leucine 123 to leucine 128.

The protein belongs to the RNA methyltransferase RlmH family. In terms of assembly, homodimer.

It localises to the cytoplasm. The enzyme catalyses pseudouridine(1915) in 23S rRNA + S-adenosyl-L-methionine = N(3)-methylpseudouridine(1915) in 23S rRNA + S-adenosyl-L-homocysteine + H(+). In terms of biological role, specifically methylates the pseudouridine at position 1915 (m3Psi1915) in 23S rRNA. The polypeptide is Ribosomal RNA large subunit methyltransferase H (Colwellia psychrerythraea (strain 34H / ATCC BAA-681) (Vibrio psychroerythus)).